We begin with the raw amino-acid sequence, 1462 residues long: Serine/threonine-protein kinase HSL1 (1462 aa).

2 disordered regions span residues 1–26 (MSTV…SSSM) and 41–69 (RLSQ…KLGR). Residues 65-330 (WKLGRTLGRG…IDAILTHPLL (266 aa)) form the Protein kinase domain. ATP is bound by residues 71–79 (LGRGSTGRV) and Lys94. Asp201 (proton acceptor) is an active-site residue. Disordered stretches follow at residues 412–450 (SNSF…HTTV), 471–540 (SAKG…TSVN), 598–637 (ENSK…TWSL), 992–1031 (EDEE…NYDF), 1095–1230 (KETL…QQTK), and 1269–1321 (NRAA…LQKE). Polar residues-rich tracts occupy residues 428-440 (PRST…TVTD) and 471-487 (SAKG…PNTP). A compositionally biased stretch (low complexity) spans 510–526 (ASRSRNASSRSLKSNSS). The span at 527 to 540 (TGRNGNNASVTSVN) shows a compositional bias: polar residues. Positions 610-620 (QLPPPPPPPIE) are enriched in pro residues. The stretch at 636–715 (SLARRERELA…KLQKHQSAHD (80 aa)) forms a coiled coil. Basic and acidic residues predominate over residues 1095–1130 (KETLLKNHSSDEATIEVKEDNNEHDFNDKIKQHYDD). Residues 1131 to 1153 (NGDSEEDDEDEDEEEEDDDDDDD) show a composition bias toward acidic residues. Polar residues-rich tracts occupy residues 1165–1176 (HNYSLAEITSES), 1197–1218 (STGI…NNGD), and 1292–1302 (NISQPLSSPTK).

Belongs to the protein kinase superfamily. CAMK Ser/Thr protein kinase family. NIM1 subfamily. In terms of processing, phosphorylated throughout the cell cycle, except for the G1 phase.

It localises to the bud neck. It carries out the reaction L-seryl-[protein] + ATP = O-phospho-L-seryl-[protein] + ADP + H(+). The catalysed reaction is L-threonyl-[protein] + ATP = O-phospho-L-threonyl-[protein] + ADP + H(+). Protein kinase involved in determination of morphology during the cell cycle of both yeast-form and hyphal cells via regulation of SWE1 and CDC28. Regulates pseudohypha formation, but is not required for septin ring organization or septum formation. Plays an essential role in virulence in a mouse model. In Candida albicans (strain SC5314 / ATCC MYA-2876) (Yeast), this protein is Serine/threonine-protein kinase HSL1 (HSL1).